The chain runs to 275 residues: Exosome complex component Rrp42 (275 aa).

Belongs to the RNase PH family. Rrp42 subfamily. As to quaternary structure, component of the archaeal exosome complex. Forms a hexameric ring-like arrangement composed of 3 Rrp41-Rrp42 heterodimers. The hexameric ring associates with a trimer of Rrp4 and/or Csl4 subunits.

The protein resides in the cytoplasm. Its function is as follows. Non-catalytic component of the exosome, which is a complex involved in RNA degradation. Contributes to the structuring of the Rrp41 active site. The chain is Exosome complex component Rrp42 from Saccharolobus islandicus (strain M.16.27) (Sulfolobus islandicus).